An 83-amino-acid chain; its full sequence is Apolipoprotein C-I, acidic form (83 aa).

An N-terminal signal peptide occupies residues 1 to 26 (MRLFLSLPVLVVVLSMVLEGPAPAQG).

Belongs to the apolipoprotein C1 family.

The protein localises to the secreted. Inhibitor of lipoprotein binding to the low density lipoprotein (LDL) receptor, LDL receptor-related protein, and very low density lipoprotein (VLDL) receptor. Associates with high density lipoproteins (HDL) and the triacylglycerol-rich lipoproteins in the plasma and makes up about 10% of the protein of the VLDL and 2% of that of HDL. Appears to interfere directly with fatty acid uptake and is also the major plasma inhibitor of cholesteryl ester transfer protein (CETP). Binds free fatty acids and reduces their intracellular esterification. Modulates the interaction of APOE with beta-migrating VLDL and inhibits binding of beta-VLDL to the LDL receptor-related protein. The chain is Apolipoprotein C-I, acidic form (APOC1A) from Pongo abelii (Sumatran orangutan).